A 46-amino-acid polypeptide reads, in one-letter code: Esculentin-1 (46 aa).

A disulfide bridge connects residues Cys40 and Cys46.

As to expression, expressed by the skin glands.

The protein resides in the secreted. In terms of biological role, antimicrobial peptide. Stimulates insulin release by BRIN-BD11 cells in vitro. The chain is Esculentin-1 from Pelophylax saharicus (Sahara frog).